A 29-amino-acid polypeptide reads, in one-letter code: Cycloviolacin-H2 (29 aa).

The segment at residues 1–29 (SAIACGESCVYIPCFIPGCSCRNRVCYLN) is a cross-link (cyclopeptide (Ser-Asn)). 3 disulfides stabilise this stretch: cysteine 5–cysteine 19, cysteine 9–cysteine 21, and cysteine 14–cysteine 26.

In terms of processing, this is a cyclic peptide.

In terms of biological role, probably participates in a plant defense mechanism. The protein is Cycloviolacin-H2 of Viola hederacea (Australian violet).